A 495-amino-acid polypeptide reads, in one-letter code: ATP-dependent RNA helicase dbp3 (495 aa).

Over residues 1 to 14 the composition is skewed to basic and acidic residues; that stretch reads MAKRELQDKGSTEH. Positions 1–49 are disordered; sequence MAKRELQDKGSTEHRAKKKSRNEKHTKKAEDSQASAQSSETQYTDPKEP. The span at 15–27 shows a compositional bias: basic residues; that stretch reads RAKKKSRNEKHTK. Residues 97–105 carry the Q motif motif; it reads SFTSPTAIQ. Residues 109 to 284 form the Helicase ATP-binding domain; the sequence is WPFLFSGRDV…ATFMTSPVTV (176 aa). 122–129 contributes to the ATP binding site; that stretch reads AETGSGKT. A DEAD box motif is present at residues 231–234; that stretch reads DEAD. Positions 315–464 constitute a Helicase C-terminal domain; sequence RLVQLLNKYQ…DVPEDLLKFG (150 aa).

This sequence belongs to the DEAD box helicase family. DDX5/DBP2 subfamily.

Its subcellular location is the nucleus. It localises to the nucleolus. It carries out the reaction ATP + H2O = ADP + phosphate + H(+). In terms of biological role, ATP-dependent RNA helicase required for 60S ribosomal subunit synthesis. Involved in efficient pre-rRNA processing, predominantly at site A3, which is necessary for the normal formation of 25S and 5.8S rRNAs. The sequence is that of ATP-dependent RNA helicase dbp3 (dbp3) from Aspergillus niger (strain ATCC MYA-4892 / CBS 513.88 / FGSC A1513).